A 102-amino-acid polypeptide reads, in one-letter code: Large ribosomal subunit protein uL24 (102 aa).

It belongs to the universal ribosomal protein uL24 family. Part of the 50S ribosomal subunit.

One of two assembly initiator proteins, it binds directly to the 5'-end of the 23S rRNA, where it nucleates assembly of the 50S subunit. Its function is as follows. One of the proteins that surrounds the polypeptide exit tunnel on the outside of the subunit. The polypeptide is Large ribosomal subunit protein uL24 (Polynucleobacter asymbioticus (strain DSM 18221 / CIP 109841 / QLW-P1DMWA-1) (Polynucleobacter necessarius subsp. asymbioticus)).